The chain runs to 402 residues: GTPase Obg (402 aa).

Positions 1-159 (MRFIDEAIVT…KELKFELKVV (159 aa)) constitute an Obg domain. The 175-residue stretch at 160–334 (ADVGLIGLPN…VKYHLMNEIE (175 aa)) folds into the OBG-type G domain. Residues 166–173 (GLPNAGKS), 191–195 (FTTLV), 213–216 (DIPG), 283–286 (NKID), and 315–317 (STL) each bind GTP. 2 residues coordinate Mg(2+): Ser-173 and Thr-193. The segment at 382 to 402 (AAFNNELDDDDDDGVEVVYAP) is disordered. Residues 387–396 (ELDDDDDDGV) show a composition bias toward acidic residues.

It belongs to the TRAFAC class OBG-HflX-like GTPase superfamily. OBG GTPase family. As to quaternary structure, monomer. Mg(2+) is required as a cofactor.

It is found in the cytoplasm. An essential GTPase which binds GTP, GDP and possibly (p)ppGpp with moderate affinity, with high nucleotide exchange rates and a fairly low GTP hydrolysis rate. Plays a role in control of the cell cycle, stress response, ribosome biogenesis and in those bacteria that undergo differentiation, in morphogenesis control. The sequence is that of GTPase Obg from Psychrobacter sp. (strain PRwf-1).